The chain runs to 200 residues: Molybdenum cofactor guanylyltransferase (200 aa).

GTP contacts are provided by residues 10–12 (LAG), K23, N51, D69, and D99. D99 lines the Mg(2+) pocket.

The protein belongs to the MobA family. In terms of assembly, monomer. It depends on Mg(2+) as a cofactor.

The protein localises to the cytoplasm. The catalysed reaction is Mo-molybdopterin + GTP + H(+) = Mo-molybdopterin guanine dinucleotide + diphosphate. In terms of biological role, transfers a GMP moiety from GTP to Mo-molybdopterin (Mo-MPT) cofactor (Moco or molybdenum cofactor) to form Mo-molybdopterin guanine dinucleotide (Mo-MGD) cofactor. The sequence is that of Molybdenum cofactor guanylyltransferase from Shewanella halifaxensis (strain HAW-EB4).